We begin with the raw amino-acid sequence, 622 residues long: MKIKAVAIFLSLLMIISLFSGCVENEKPIKEGSNDFKLIPVNSKSNFEEFKNTVENSIGNYIYVGHSYASREVQITSTVKSSNVETSTEPERFSKTNVQVKGVDEADILKTNGNIIAFSQNKIYLIKPLPPKYAKIIKNISECGYLYLTNNTLIVISWNKITSYNVSNPEMPKIIWQMDLNGSYVDSRLYNGTLYLVVRKNSIDCPIVWNNYKIGYDKYYIPELPPIYSMDFDTTYIISRINIKSGKVENSIAIVGNYKTTLYMSKNNLYFAYNLKINEKKLMLNFLNESADKYFPTEVADKIKRVIENEDFGDNAKFVEITETIERYLSSLPSEKRHNLMKKLQNDFENYLEEHWEEFEYTGIAKINLDSFEVKSGKVSGHLLNNFAMDEYNGYLRVATTIGDWRFRDKMTNNIYILDSDLNVVGKLTGLEKGERIYAVRFMGDKAYIVTYKETDPLLVIDLKNPKNPKVLGELKIPGYSTYLHPIGNNLFIGIGKDDDGKLKISLFNISDLNNPKEVDKYKLNVWWSPAFRDYHAFLWDEKYKIFFLPAYNHAYVFKVEDNKIEMVKDDEHKTNVLRALFINNYLYTFSLSEMHILDENNWQLVKKIEFENYLPYGYGFK.

The first 20 residues, Met1 to Ser20, serve as a signal peptide directing secretion.

This is an uncharacterized protein from Methanocaldococcus jannaschii (strain ATCC 43067 / DSM 2661 / JAL-1 / JCM 10045 / NBRC 100440) (Methanococcus jannaschii).